A 180-amino-acid chain; its full sequence is Large ribosomal subunit protein uL15 (180 aa).

A disordered region spans residues 1–62; it reads MKKERLEQAS…KTAGRGSKGQ (62 aa).

The protein belongs to the universal ribosomal protein uL15 family. In terms of assembly, part of the 50S ribosomal subunit.

Functionally, binds to the 23S rRNA. The chain is Large ribosomal subunit protein uL15 from Leptospira interrogans serogroup Icterohaemorrhagiae serovar copenhageni (strain Fiocruz L1-130).